The sequence spans 294 residues: Secreted frizzled-related protein 2 (294 aa).

A signal peptide spans 1-24; it reads MPRGPGSLLLLVLASHCCLGSARG. In terms of domain architecture, FZ spans 34–154; sequence YKRSNCKPIP…PQDNDLCIPL (121 aa). Intrachain disulfides connect Cys-39–Cys-102, Cys-49–Cys-95, Cys-86–Cys-124, Cys-113–Cys-151, Cys-117–Cys-141, Cys-171–Cys-244, Cys-174–Cys-246, and Cys-189–Cys-294. An NTR domain is found at 171 to 294; the sequence is CEACKNKNED…ISRSIRKLQC (124 aa).

Belongs to the secreted frizzled-related protein (sFRP) family.

The protein localises to the secreted. Its function is as follows. Soluble frizzled-related proteins (sFRPS) function as modulators of Wnt signaling through direct interaction with Wnts. They have a role in regulating cell growth and differentiation in specific cell types. SFRP2 may be important for eye retinal development and for myogenesis. This chain is Secreted frizzled-related protein 2 (SFRP2), found in Canis lupus familiaris (Dog).